A 45-amino-acid chain; its full sequence is Large ribosomal subunit protein bL34 (45 aa).

The protein belongs to the bacterial ribosomal protein bL34 family.

This chain is Large ribosomal subunit protein bL34, found in Streptomyces avermitilis (strain ATCC 31267 / DSM 46492 / JCM 5070 / NBRC 14893 / NCIMB 12804 / NRRL 8165 / MA-4680).